Here is a 381-residue protein sequence, read N- to C-terminus: Galactose-1-phosphate uridylyltransferase (381 aa).

Residues C65 and C68 each coordinate Zn(2+). A UDP-alpha-D-glucose-binding site is contributed by 90–91; it reads ND. Zn(2+) is bound at residue H131. N175 serves as a coordination point for UDP-alpha-D-glucose. Zn(2+) is bound at residue H186. H188 functions as the Tele-UMP-histidine intermediate in the catalytic mechanism. Q190 provides a ligand contact to UDP-alpha-D-glucose. Residues E204, H306, H323, and H325 each contribute to the Fe cation site. UDP-alpha-D-glucose contacts are provided by residues 338–341 and 343–344; these read KFMV and FE.

It belongs to the galactose-1-phosphate uridylyltransferase type 1 family. In terms of assembly, homodimer. Zn(2+) is required as a cofactor.

It catalyses the reaction alpha-D-galactose 1-phosphate + UDP-alpha-D-glucose = alpha-D-glucose 1-phosphate + UDP-alpha-D-galactose. It participates in carbohydrate metabolism; galactose metabolism. This is Galactose-1-phosphate uridylyltransferase (GAL7) from Cryptococcus neoformans var. neoformans serotype D (strain B-3501A) (Filobasidiella neoformans).